We begin with the raw amino-acid sequence, 199 residues long: Recombination protein RecR (199 aa).

The C4-type zinc-finger motif lies at 58-73; it reads CSVCYNLSETELCRIC. The region spanning 81-176 is the Toprim domain; that stretch reads TRLCVVEQPR…EITRLARGIT (96 aa).

It belongs to the RecR family.

In terms of biological role, may play a role in DNA repair. It seems to be involved in an RecBC-independent recombinational process of DNA repair. It may act with RecF and RecO. This chain is Recombination protein RecR, found in Rhodopirellula baltica (strain DSM 10527 / NCIMB 13988 / SH1).